The chain runs to 65 residues: Large ribosomal subunit protein bL35 (65 aa).

Belongs to the bacterial ribosomal protein bL35 family.

This chain is Large ribosomal subunit protein bL35, found in Enterobacter sp. (strain 638).